We begin with the raw amino-acid sequence, 248 residues long: MSPRKFFVGGNWKMNGDKKSLGELINTLNSGKMNADTEVVCGAPAIYLDFARQKLDAKIALSAQNCYKVAKGAFTGEISPAMIKDCGATWVILGHSERRHVFGECDELIGQKVAHALSEGIGVIACIGEKLDQREAGITEKVVFEQTKAIADNVKDWSKVVLAYEPVWAIGTGKTATPEQAQEVHKKLREWVKTNVSEGVAQSVRIIYGGSVTGGTCRELAGQPDIDGFLVGGASLKPEFIEIINAKH.

Asn-11 and Lys-13 together coordinate substrate. The active-site Electrophile is His-95. Residue Glu-165 is the Proton acceptor of the active site.

The protein belongs to the triosephosphate isomerase family. Homodimer.

The protein localises to the cytoplasm. It catalyses the reaction dihydroxyacetone phosphate = methylglyoxal + phosphate. It carries out the reaction D-glyceraldehyde 3-phosphate = dihydroxyacetone phosphate. It functions in the pathway carbohydrate degradation; glycolysis; D-glyceraldehyde 3-phosphate from glycerone phosphate: step 1/1. Its pathway is carbohydrate biosynthesis; gluconeogenesis. Triosephosphate isomerase is an extremely efficient metabolic enzyme that catalyzes the interconversion between dihydroxyacetone phosphate (DHAP) and D-glyceraldehyde-3-phosphate (G3P) in glycolysis and gluconeogenesis. Its function is as follows. It is also responsible for the non-negligible production of methylglyoxal a reactive cytotoxic side-product that modifies and can alter proteins, DNA and lipids. The sequence is that of Triosephosphate isomerase (tpi1) from Xenopus laevis (African clawed frog).